The sequence spans 505 residues: Maturase K (505 aa).

It belongs to the intron maturase 2 family. MatK subfamily.

The protein resides in the plastid. It is found in the chloroplast. Usually encoded in the trnK tRNA gene intron. Probably assists in splicing its own and other chloroplast group II introns. In Gomphrena haageana (Haage's globe-amaranth), this protein is Maturase K.